The sequence spans 378 residues: Signal peptide peptidase (378 aa).

The interval 1 to 27 is disordered; it reads MDSAVSDPHNGSAEAGTPANGTTRPPS. Residues 1–31 are Lumenal-facing; that stretch reads MDSAVSDPHNGSAEAGTPANGTTRPPSTPEG. N-linked (GlcNAc...) asparagine glycans are attached at residues Asn-10 and Asn-20. Residues 32 to 52 traverse the membrane as a helical segment; it reads IALAYGSLLLMALLPIFFGAL. The Cytoplasmic portion of the chain corresponds to 53–77; sequence RSVRCARGKSSSDMPETITSRDAAR. Residues 78 to 98 traverse the membrane as a helical segment; that stretch reads FPIIASCTLLGLYLFFKIFSQ. The Lumenal portion of the chain corresponds to 99–100; it reads EY. Residues 101-121 traverse the membrane as a helical segment; it reads INLLLSMYFFVLGILALSHTI. At 122-157 the chain is on the cytoplasmic side; sequence SPFMNKFFPANFPNRQYQLLFTQGSGENKEEIINYE. The chain crosses the membrane as a helical span at residues 158 to 178; the sequence is FDTKDLVCLGLSSVVGVWYLL. Residues 179-181 are Lumenal-facing; it reads RKH. The helical transmembrane segment at 182-202 threads the bilayer; sequence WIANNLFGLAFSLNGVELLHL. The Cytoplasmic portion of the chain corresponds to 203–209; the sequence is NNVSTGC. The chain crosses the membrane as a helical span at residues 210 to 230; sequence ILLGGLFIYDIFWVFGTNVMV. Residue Asp-219 is part of the active site. Residues 231-256 are Lumenal-facing; that stretch reads TVAKSFEAPIKLVFPQDLLEKGLEAD. A helical transmembrane segment spans residues 257-277; the sequence is NFAMLGLGDIVIPGIFIALLL. Asp-265 is a catalytic residue. Over 278–290 the chain is Cytoplasmic; it reads RFDISLKKNTHTY. The helical transmembrane segment at 291 to 311 threads the bilayer; the sequence is FYTSFAAYIFGLGLTIFIMHI. The Lumenal portion of the chain corresponds to 312-314; that stretch reads FKH. The chain crosses the membrane as a helical span at residues 315-335; it reads AQPALLYLVPACIGFPVLVAL. Residues 317 to 319 carry the PAL motif; the sequence is PAL. The Cytoplasmic segment spans residues 336–378; the sequence is AKGEVAEMFSYEESNPKDPAAETESKEESTEASASKRLEKKEK. Positions 346–378 are disordered; the sequence is YEESNPKDPAAETESKEESTEASASKRLEKKEK. A compositionally biased stretch (basic and acidic residues) spans 349–378; the sequence is SNPKDPAAETESKEESTEASASKRLEKKEK. At Ser-368 the chain carries Phosphoserine.

The protein belongs to the peptidase A22B family. In terms of assembly, monomer. Homodimer. Interacts with RNF139. Interacts with DERL1 and XBP1 isoform 1. As to expression, widely expressed with highest levels in liver and kidney. In the brain, expressed predominantly in hippocampus, amygdala, piriform cortex, choroid plexus and arcuate nucleus of the hypothalamic area. Isoform 1 is more strongly expressed than isoform 4 in most tissues except brain and skeletal muscle where isoform 4 is the dominant isoform and in testis where isoform 1 and isoform 4 are expressed at similar levels. In the brain, isoform 4 is not detected in the choroid plexus.

Its subcellular location is the endoplasmic reticulum membrane. The protein localises to the membrane. The protein resides in the cell membrane. Its function is as follows. Catalyzes intramembrane proteolysis of signal peptides that have been removed from precursors of secretory and membrane proteins, resulting in the release of the fragment from the ER membrane into the cytoplasm. Required to generate lymphocyte cell surface (HLA-E) epitopes derived from MHC class I signal peptides. Involved in the intramembrane cleavage of the integral membrane protein PSEN1. Cleaves the integral membrane protein XBP1 isoform 1 in a DERL1/RNF139-dependent manner. May play a role in graft rejection. The protein is Signal peptide peptidase of Mus musculus (Mouse).